Consider the following 170-residue polypeptide: Tubulin polymerization-promoting protein family member 2 (170 aa).

Low complexity predominate over residues 105 to 117; the sequence is TTGVTKSTTVGGV. The interval 105–170 is disordered; it reads TTGVTKSTTV…GAGTYDKKNQ (66 aa). Residues 129–149 are compositionally biased toward basic and acidic residues; that stretch reads THKERFDESGKGKGIEGREET.

It belongs to the TPPP family. Only expressed in male reproductive organs, including testis. Expressed in elongating spermatids at stages IV-VIII of the seminiferous epithelial cycle in testis and in mature sperm in the epididymis.

It is found in the cytoplasm. Its subcellular location is the cytosol. The protein localises to the cell projection. The protein resides in the cilium. It localises to the flagellum. Functionally, probable regulator of microtubule dynamics required for sperm motility. In contrast to other members of the family, has no microtubule bundling activity. In Mus musculus (Mouse), this protein is Tubulin polymerization-promoting protein family member 2.